Here is a 98-residue protein sequence, read N- to C-terminus: Small ribosomal subunit protein uS19 (98 aa).

2 disordered regions span residues 1–30 and 78–98; these read MARS…KKSV and RTFH…PAKK. Residues 9–24 show a composition bias toward basic and acidic residues; the sequence is PFADKHLTKKVEDANK.

It belongs to the universal ribosomal protein uS19 family.

Protein S19 forms a complex with S13 that binds strongly to the 16S ribosomal RNA. This Anaeromyxobacter dehalogenans (strain 2CP-1 / ATCC BAA-258) protein is Small ribosomal subunit protein uS19.